Here is a 470-residue protein sequence, read N- to C-terminus: Box C/D snoRNA protein 1 (470 aa).

Residues 1–70 (MEFAAENEGK…EEGSGQRPEE (70 aa)) are disordered. Ser-25 is modified (phosphoserine). The segment covering 41–51 (EFGGGEEGTGL) has biased composition (gly residues). Residues Lys-79, Lys-108, Lys-118, Lys-138, Lys-143, Lys-153, Lys-162, Lys-173, Lys-183, and Lys-200 each participate in a glycyl lysine isopeptide (Lys-Gly) (interchain with G-Cter in SUMO2) cross-link. Residues Cys-220, Cys-223, Cys-232, Cys-235, Cys-240, Cys-244, His-248, and Cys-254 each contribute to the Zn(2+) site. The HIT-type zinc-finger motif lies at 220–254 (CETCGTEEAKYRCPRCMRYSCSLPCVKKHKAELTC). Lys-459 is covalently cross-linked (Glycyl lysine isopeptide (Lys-Gly) (interchain with G-Cter in SUMO2)).

Belongs to the BCD1 family. In terms of assembly, interacts with FBL, SNU13, NOP58, NUFIP1, RUVBL1, RUVBL2 and TAF9. Interacts (via HIT-type zinc finger) with the RUVBL1/RUVBL2 complex in the presence of ADP.

Functionally, required for box C/D snoRNAs accumulation involved in snoRNA processing, snoRNA transport to the nucleolus and ribosome biogenesis. The protein is Box C/D snoRNA protein 1 (ZNHIT6) of Homo sapiens (Human).